Consider the following 402-residue polypeptide: Probable glutamate 5-kinase (402 aa).

Substrate contacts are provided by Ser-58, Asp-145, and Asn-157. Residues 177-178 (TD) and 218-224 (TGGMKTK) each bind ATP. In terms of domain architecture, PUA spans 295 to 373 (HGSLEIDRGA…KEIASILGYN (79 aa)).

This sequence belongs to the glutamate 5-kinase family.

It localises to the cytoplasm. It carries out the reaction L-glutamate + ATP = L-glutamyl 5-phosphate + ADP. It functions in the pathway amino-acid biosynthesis; L-proline biosynthesis; L-glutamate 5-semialdehyde from L-glutamate: step 1/2. Functionally, catalyzes the transfer of a phosphate group to glutamate to form glutamate 5-phosphate which rapidly cyclizes to 5-oxoproline. The sequence is that of Probable glutamate 5-kinase from Schizosaccharomyces pombe (strain 972 / ATCC 24843) (Fission yeast).